The following is a 954-amino-acid chain: Mitogen-activated protein kinase kinase kinase 10 (954 aa).

In terms of domain architecture, SH3 spans 16-81 (PAGPVWTAVF…PSNYVAPGAP (66 aa)). Residues 98-360 (LQLEEIIGVG…GSILKRLEVI (263 aa)) enclose the Protein kinase domain. Residues 104 to 112 (IGVGGFGKV) and Lys-125 each bind ATP. Residue Asp-222 is the Proton acceptor of the active site. Position 258 is a phosphothreonine; by autocatalysis (Thr-258). A Phosphoserine; by autocatalysis and MAP4K1 modification is found at Ser-262. 2 leucine-zipper regions span residues 384-405 (IQHM…EEEL) and 419-440 (LRRR…ELHL). 3 disordered regions span residues 490-665 (PTLD…RWGH), 716-739 (RFPR…PGLG), and 757-954 (STRS…HGSH). Phosphoserine occurs at positions 498, 502, and 506. Low complexity predominate over residues 501–511 (ASPPASPSIIP). Phosphothreonine is present on Thr-558. Residues 566–578 (QKERVGGEERLKG) show a composition bias toward basic and acidic residues. Over residues 611-620 (EMEEFAEAED) the composition is skewed to acidic residues. Over residues 631–640 (STPSYLSVPL) the composition is skewed to low complexity. The span at 773–790 (APSPPPSPPAPTPTPSPS) shows a compositional bias: pro residues. Arg-857 carries the post-translational modification Omega-N-methylarginine. Over residues 913-927 (PSRPDTPESPGPPSV) the composition is skewed to pro residues.

It belongs to the protein kinase superfamily. STE Ser/Thr protein kinase family. MAP kinase kinase kinase subfamily. As to quaternary structure, homodimer. Interacts with SH3RF2. Requires Mg(2+) as cofactor. Post-translationally, autophosphorylation on serine and threonine residues within the activation loop plays a role in enzyme activation. As to expression, expressed in brain and skeletal muscle.

The enzyme catalyses L-seryl-[protein] + ATP = O-phospho-L-seryl-[protein] + ADP + H(+). It carries out the reaction L-threonyl-[protein] + ATP = O-phospho-L-threonyl-[protein] + ADP + H(+). With respect to regulation, homodimerization via the leucine zipper domains is required for autophosphorylation and subsequent activation. In terms of biological role, activates the JUN N-terminal pathway. The polypeptide is Mitogen-activated protein kinase kinase kinase 10 (MAP3K10) (Homo sapiens (Human)).